The following is a 544-amino-acid chain: MTPSELKRLYHITKVQLEYGLDELLPEHALTQLPKRLRKGLFWIKNKYPEKPLGERLRLALQELGPVWIKFGQMMSTRRDLFPPHLADQLALLQDQVAPFDGQLAKDQMEMELGGPLDNWFTDFDIKPLASASIAQVHTAKLKDSGREIVLKVIRPDIRPVIESDIRLMYRMARLVEQHIPEARRLKPVEVIEEYEKTLLDELDLRREASNAMQLRRNFEGSEELYVPEVILDLSSEHLMVSERIYGIQVSDIEQLEKNGTNMKLLAERGVSVFFTQVFRDSFFHADMHPGNVFVNPDNPENPQWIGLDCGIVGTLNKEDKRYLAENLLGFFNSDYHKVAQLHVDSGWVPADTNVEEFEFAIRMVCEPIFAKPLGEISFGHVLLNLFNTARRFNMEVQPQLVLLQKTLLYVEGLGRQLYPQLDLWATAKPFLETWMAKQVGPAAFVTALSEKAPFWAEKLPELPDLVYDSLRQGKVLNQRMDKLYAGYRQSKRQQAKGQFLFNVGATLLICSAVLLTSNITVLASISAATGAAFWLFSWRAYRR.

Positions Asp123–Leu501 constitute a Protein kinase domain. ATP contacts are provided by residues Leu129 to Val137 and Lys152. Asp287 (proton acceptor) is an active-site residue. Residues Leu515–Phe537 form a helical membrane-spanning segment.

Belongs to the ABC1 family. UbiB subfamily.

The protein localises to the cell inner membrane. It functions in the pathway cofactor biosynthesis; ubiquinone biosynthesis [regulation]. Functionally, is probably a protein kinase regulator of UbiI activity which is involved in aerobic coenzyme Q (ubiquinone) biosynthesis. In Aliivibrio fischeri (strain MJ11) (Vibrio fischeri), this protein is Probable protein kinase UbiB.